We begin with the raw amino-acid sequence, 120 residues long: Ribosome-binding factor A (120 aa).

The protein belongs to the RbfA family. In terms of assembly, monomer. Binds 30S ribosomal subunits, but not 50S ribosomal subunits or 70S ribosomes.

Its subcellular location is the cytoplasm. Functionally, one of several proteins that assist in the late maturation steps of the functional core of the 30S ribosomal subunit. Associates with free 30S ribosomal subunits (but not with 30S subunits that are part of 70S ribosomes or polysomes). Required for efficient processing of 16S rRNA. May interact with the 5'-terminal helix region of 16S rRNA. In Chlamydia felis (strain Fe/C-56) (Chlamydophila felis), this protein is Ribosome-binding factor A.